The chain runs to 408 residues: BRCA1-A complex subunit Abraxas 1 (408 aa).

The MPN domain occupies 7–155 (TAVISGFVFG…KSTHRLEYAL (149 aa)). A coiled-coil region spans residues 210 to 272 (ALAEVNRISD…MEEKGNKVSE (63 aa)). A disordered region spans residues 335–408 (HRRQAGKRKA…EVSRSKSPTF (74 aa)). The span at 337–358 (RQAGKRKAHSKQLGKTSTKKSR) shows a compositional bias: basic residues. Polar residues predominate over residues 394–408 (QSLNVEVSRSKSPTF). Phosphoserine is present on Ser-405. The short motif at 405–408 (SPTF) is the pSXXF motif element.

Belongs to the FAM175 family. Abraxas subfamily. Component of the BRCA1-A complex. Component of the BRISC complex. Homodimer. Interacts directly (when phosphorylated at Ser-405) with brca1. The phosphorylated homodimer can interact directly with two brca1 chains, giving rise to a heterotetramer. In terms of processing, phosphorylation of Ser-405 of the pSXXF motif by ATM or ATR constitutes a specific recognition motif for the BRCT domain of BRCA1.

The protein localises to the nucleus. Functionally, involved in DNA damage response and double-strand break (DSB) repair. Component of the BRCA1-A complex, acting as a central scaffold protein that assembles the various components of the complex and mediates the recruitment of brca1. The BRCA1-A complex specifically recognizes 'Lys-63'-linked ubiquitinated histones H2A and H2AX at DNA lesion sites, leading to target the brca1-bard1 heterodimer to sites of DNA damage at DSBs. This complex also possesses deubiquitinase activity that specifically removes 'Lys-63'-linked ubiquitin on histones H2A and H2AX. The polypeptide is BRCA1-A complex subunit Abraxas 1 (Xenopus laevis (African clawed frog)).